We begin with the raw amino-acid sequence, 310 residues long: Methionyl-tRNA formyltransferase (310 aa).

Position 109–112 (109–112) interacts with (6S)-5,6,7,8-tetrahydrofolate; it reads SLLP.

The protein belongs to the Fmt family.

It carries out the reaction L-methionyl-tRNA(fMet) + (6R)-10-formyltetrahydrofolate = N-formyl-L-methionyl-tRNA(fMet) + (6S)-5,6,7,8-tetrahydrofolate + H(+). Functionally, attaches a formyl group to the free amino group of methionyl-tRNA(fMet). The formyl group appears to play a dual role in the initiator identity of N-formylmethionyl-tRNA by promoting its recognition by IF2 and preventing the misappropriation of this tRNA by the elongation apparatus. In Pseudomonas entomophila (strain L48), this protein is Methionyl-tRNA formyltransferase.